The following is a 531-amino-acid chain: Ceramide kinase (531 aa).

An essential for enzyme activity region spans residues 1 to 115; sequence MGAMGAAEPL…SADEQLCHLW (115 aa). Positions 1–125 are required for binding to sulfatide and phosphoinositides; it reads MGAMGAAEPL…LQTLRGLLES (125 aa). The 151-residue stretch at 128 to 278 folds into the DAGKc domain; the sequence is SRPKHLLVFI…IDVSSVHYHN (151 aa). Residues 138 to 140 and 170 to 174 each bind ATP; these read NPF and TEHAN. A substrate-binding site is contributed by 195–198; the sequence is GGDG. The Proton donor/acceptor role is filled by D197. Residues E202, 239-241, R304, and R310 contribute to the ATP site; that span reads GST. 2 positions are modified to phosphoserine: S340 and S408. Residue 502–504 coordinates ATP; that stretch reads DGE.

Ca(2+) is required as a cofactor. Requires Mg(2+) as cofactor. High level expression in heart, brain, testis and pancreas; low expression in spleen, liver and lung; not detected in skeletal muscle.

It localises to the cytoplasm. It is found in the cell membrane. It catalyses the reaction an N-acylsphing-4-enine + ATP = an N-acylsphing-4-enine 1-phosphate + ADP + H(+). It carries out the reaction N-(hexanoyl)sphing-4-enine + ATP = N-hexanoylsphing-4-enine 1-phosphate + ADP + H(+). The catalysed reaction is N-(acetyl)-sphing-4-enine + ATP = N-(acetyl)-sphing-4-enine-1-phosphate + ADP + H(+). The enzyme catalyses N-hexadecanoylsphing-4-enine + ATP = N-(hexadecanoyl)-sphing-4-enine-1-phosphate + ADP + H(+). It catalyses the reaction N-hexanoyl-(4R)-hydroxysphinganine + ATP = N-hexanoyl-(4R)-hydroxysphinganine-1-phosphate + ADP + H(+). Its function is as follows. Catalyzes specifically the phosphorylation of ceramide to form ceramide 1-phosphate. Acts efficiently on natural and analog ceramides (C6, C8, C16 ceramides, and C8-dihydroceramide), to a lesser extent on C2-ceramide and C6-dihydroceramide, but not on other lipids, such as various sphingosines. Shows a greater preference for D-erythro isomer of ceramides. Binds phosphoinositides. This is Ceramide kinase (Cerk) from Mus musculus (Mouse).